The following is a 528-amino-acid chain: Membrane protein insertase YidC (528 aa).

4 helical membrane passes run 5–25 (VVIA…IFPP), 346–366 (YGIA…PLTH), 416–436 (LPMI…MFSI), and 486–506 (MLAL…GLVL).

Belongs to the OXA1/ALB3/YidC family. Type 1 subfamily. Interacts with the Sec translocase complex via SecD. Specifically interacts with transmembrane segments of nascent integral membrane proteins during membrane integration.

The protein resides in the cell inner membrane. Functionally, required for the insertion and/or proper folding and/or complex formation of integral membrane proteins into the membrane. Involved in integration of membrane proteins that insert both dependently and independently of the Sec translocase complex, as well as at least some lipoproteins. Aids folding of multispanning membrane proteins. This chain is Membrane protein insertase YidC, found in Geotalea uraniireducens (strain Rf4) (Geobacter uraniireducens).